The primary structure comprises 461 residues: Proline--tRNA ligase (461 aa).

Belongs to the class-II aminoacyl-tRNA synthetase family. ProS type 3 subfamily. As to quaternary structure, homodimer.

The protein localises to the cytoplasm. It carries out the reaction tRNA(Pro) + L-proline + ATP = L-prolyl-tRNA(Pro) + AMP + diphosphate. Catalyzes the attachment of proline to tRNA(Pro) in a two-step reaction: proline is first activated by ATP to form Pro-AMP and then transferred to the acceptor end of tRNA(Pro). The polypeptide is Proline--tRNA ligase (Methanococcus vannielii (strain ATCC 35089 / DSM 1224 / JCM 13029 / OCM 148 / SB)).